Consider the following 427-residue polypeptide: Serine--tRNA ligase (427 aa).

231-233 lines the L-serine pocket; that stretch reads TAE. 262–264 is an ATP binding site; that stretch reads RSE. Glu285 serves as a coordination point for L-serine. 349–352 serves as a coordination point for ATP; the sequence is EISS. Ser385 serves as a coordination point for L-serine.

The protein belongs to the class-II aminoacyl-tRNA synthetase family. Type-1 seryl-tRNA synthetase subfamily. Homodimer. The tRNA molecule binds across the dimer.

It localises to the cytoplasm. It catalyses the reaction tRNA(Ser) + L-serine + ATP = L-seryl-tRNA(Ser) + AMP + diphosphate + H(+). The enzyme catalyses tRNA(Sec) + L-serine + ATP = L-seryl-tRNA(Sec) + AMP + diphosphate + H(+). It functions in the pathway aminoacyl-tRNA biosynthesis; selenocysteinyl-tRNA(Sec) biosynthesis; L-seryl-tRNA(Sec) from L-serine and tRNA(Sec): step 1/1. Functionally, catalyzes the attachment of serine to tRNA(Ser). Is also able to aminoacylate tRNA(Sec) with serine, to form the misacylated tRNA L-seryl-tRNA(Sec), which will be further converted into selenocysteinyl-tRNA(Sec). The protein is Serine--tRNA ligase of Sinorhizobium fredii (strain NBRC 101917 / NGR234).